We begin with the raw amino-acid sequence, 1288 residues long: (E3-independent) E2 ubiquitin-conjugating enzyme UBE2O (1288 aa).

Low complexity-rich tracts occupy residues 1–26 (MADP…APAA) and 34–47 (ATDS…DSGP). Disordered regions lie at residues 1–51 (MADP…EAGS) and 80–109 (EDSD…EGRA). Residues Ser-45, Ser-82, Ser-84, and Ser-394 each carry the phosphoserine modification. 2 disordered regions span residues 396–529 (TPDT…KNKV) and 711–743 (ESDY…NGLV). Basic and acidic residues predominate over residues 401 to 418 (CPRDHSMEDPDKKGEARA). The residue at position 436 (Ser-436) is a Phosphoserine. A compositionally biased stretch (acidic residues) spans 440–450 (MQDEGSEELQE). Residues 462–472 (EGGDDGLHSAE) are compositionally biased toward basic and acidic residues. A compositionally biased stretch (acidic residues) spans 473 to 485 (QDADDEAADDTDD). Residues Thr-483 and Thr-486 each carry the phosphothreonine modification. Over residues 486–502 (TSSVTSSASSTTSSQSG) the composition is skewed to low complexity. Residue Ser-510 is modified to Phosphoserine. A compositionally biased stretch (basic residues) spans 517–528 (NLKRKHKRKKNK). Low complexity predominate over residues 717–726 (VEGSSSGASS). A compositionally biased stretch (acidic residues) spans 727–737 (DEWEDDSDSWE). A coiled-coil region spans residues 809 to 879 (RELKEAIKIL…IAEEEKMEAV (71 aa)). Ser-833 is subject to Phosphoserine. Residue Thr-835 is modified to Phosphothreonine. At Ser-836 the chain carries Phosphoserine. Residues 872–890 (EEEKMEAVPDTERKEEKPE) are compositionally biased toward basic and acidic residues. Residues 872-899 (EEEKMEAVPDTERKEEKPEVQSPVKAEW) are disordered. A Phosphoserine modification is found at Ser-893. The 161-residue stretch at 950-1110 (KFFSTVRKEM…ALIRVVQSMT (161 aa)) folds into the UBC core domain. The active-site Glycyl thioester intermediate is the Cys-1037. Residues 1158–1247 (GALKDSSSLE…RSFLPEKSGY (90 aa)) form a disordered region.

Belongs to the ubiquitin-conjugating enzyme family. Interacts with CPNE1 (via VWFA domain) and CPNE4 (via VWFA domain). Interacts with UBR2. Post-translationally, phosphorylated. Phosphorylation affects subcellular location. In terms of processing, ubiquitinated: autoubiquitinates, possibly affecting its subcellular location. As to expression, highly expressed in reticulocytes.

Its subcellular location is the cytoplasm. The protein localises to the nucleus. The catalysed reaction is S-ubiquitinyl-[E1 ubiquitin-activating enzyme]-L-cysteine + [acceptor protein]-L-lysine = [E1 ubiquitin-activating enzyme]-L-cysteine + N(6)-monoubiquitinyl-[acceptor protein]-L-lysine.. Its pathway is protein modification; protein ubiquitination. Its activity is regulated as follows. Inhibited by inorganic arsenite such as phenylarsenoxides. E2/E3 hybrid ubiquitin-protein ligase that displays both E2 and E3 ligase activities and mediates monoubiquitination of target proteins. Negatively regulates TRAF6-mediated NF-kappa-B activation independently of its E2 activity. Acts as a positive regulator of BMP7 signaling by mediating monoubiquitination of SMAD6, thereby regulating adipogenesis. Mediates monoubiquitination at different sites of the nuclear localization signal (NLS) of BAP1, leading to cytoplasmic retention of BAP1. Also able to monoubiquitinate the NLS of other chromatin-associated proteins, such as INO80 and CXXC1, affecting their subcellular location. Acts as a regulator of retrograde transport by assisting the TRIM27:MAGEL2 E3 ubiquitin ligase complex to mediate 'Lys-63'-linked ubiquitination of WASHC1, leading to promote endosomal F-actin assembly. This chain is (E3-independent) E2 ubiquitin-conjugating enzyme UBE2O (Ube2o), found in Mus musculus (Mouse).